A 152-amino-acid polypeptide reads, in one-letter code: Protein Smg homolog (152 aa).

Belongs to the Smg family.

This Nitrosomonas europaea (strain ATCC 19718 / CIP 103999 / KCTC 2705 / NBRC 14298) protein is Protein Smg homolog.